Here is an 82-residue protein sequence, read N- to C-terminus: Putative membrane protein insertion efficiency factor (82 aa).

The interval 63–82 (GGFDPVPLKKDKNSKTTHHH) is disordered.

Belongs to the UPF0161 family.

The protein resides in the cell membrane. Functionally, could be involved in insertion of integral membrane proteins into the membrane. The chain is Putative membrane protein insertion efficiency factor from Staphylococcus epidermidis (strain ATCC 35984 / DSM 28319 / BCRC 17069 / CCUG 31568 / BM 3577 / RP62A).